The sequence spans 685 residues: Probable cysteine desulfurase (685 aa).

Positions 1-282 (MTRSPCSTTS…RDEHEVFDVA (282 aa)) are cargo-loading domain. Disordered regions lie at residues 48–135 (SIRP…TSAG) and 162–185 (PTPA…VPDT). Residues 71-85 (ATAATSAGRTAAGTA) show a composition bias toward low complexity. Pro residues predominate over residues 102–121 (LPPPASPAPEAPPQAAPPAP). Residues 122–135 (RGSAPDATAATSAG) show a composition bias toward low complexity. A compositionally biased stretch (pro residues) spans 164–178 (PAGPEAPPQSAPPAP). Lys-502 is modified (N6-(pyridoxal phosphate)lysine). Cys-640 functions as the Cysteine persulfide intermediate in the catalytic mechanism.

Belongs to the class-V pyridoxal-phosphate-dependent aminotransferase family. Csd subfamily. In terms of assembly, isolated from bacteria in a complex with encapsulin 2A (AC I3NID5), strongly suggesting it is found in a type 2A encapsulin nanocompartment. There are 1-2 copies of this protein in each encapsulin shell. Pyridoxal 5'-phosphate serves as cofactor.

It localises to the encapsulin nanocompartment. Its subcellular location is the cell membrane. The catalysed reaction is (sulfur carrier)-H + L-cysteine = (sulfur carrier)-SH + L-alanine. Cargo protein of a type 2A encapsulin nanocompartment involved in sulfur metabolism. Cysteine desulfurases mobilize the sulfur from L-cysteine to yield L-alanine, an essential step in sulfur metabolism for biosynthesis of a variety of sulfur-containing biomolecules. This Mycolicibacterium paratuberculosis (strain ATCC BAA-968 / K-10) (Mycobacterium paratuberculosis) protein is Probable cysteine desulfurase.